The primary structure comprises 185 residues: Elongation factor P (185 aa).

It belongs to the elongation factor P family.

It localises to the cytoplasm. The protein operates within protein biosynthesis; polypeptide chain elongation. Involved in peptide bond synthesis. Stimulates efficient translation and peptide-bond synthesis on native or reconstituted 70S ribosomes in vitro. Probably functions indirectly by altering the affinity of the ribosome for aminoacyl-tRNA, thus increasing their reactivity as acceptors for peptidyl transferase. This is Elongation factor P from Deinococcus geothermalis (strain DSM 11300 / CIP 105573 / AG-3a).